The sequence spans 148 residues: Snaclec flavocetin-A subunit beta (148 aa).

Residues 1–23 (MGQFIFVSFGFLVVATSLSGTEA) form the signal peptide. Disulfide bonds link Cys27/Cys38, Cys55/Cys144, and Cys121/Cys136. The C-type lectin domain maps to 34-145 (YDEHCYQVFQ…CSSKRYVVCK (112 aa)).

The protein belongs to the snaclec family. Tetramer of heterodimers of alpha and beta subunits (alphabeta)(4); disulfide-linked. Expressed by the venom gland.

It localises to the secreted. Strong platelet aggregation inhibitor. Binds specifically to platelet glycoprotein Ibalpha (GP1BA) with high affinity and inhibits vWF-dependent platelet aggregation. Has also been observed to induce small agglutinates in washed platelets by binding to GPIb. The sequence is that of Snaclec flavocetin-A subunit beta from Protobothrops flavoviridis (Habu).